The chain runs to 519 residues: Bifunctional dihydrofolate reductase-thymidylate synthase 1 (519 aa).

Ala2 is subject to N-acetylalanine. In terms of domain architecture, DHFR spans 21-198; sequence TYQVVVAATK…LRFCFTTFVR (178 aa). Substrate is bound at residue Val25. NADP(+)-binding positions include Ala27 and 33 to 39; that span reads GIGKDGK. Asp47 contacts substrate. Residues 71-73 and 92-95 contribute to the NADP(+) site; these read RKT and LTRS. Ile134 lines the substrate pocket. NADP(+) is bound at residue 135 to 142; that stretch reads GGGDILRE. Thr155 provides a ligand contact to substrate. The segment at 201 to 234 is hinge; that stretch reads SSADESSDESNGSQSLQFDGKKFLFLPKMVFDQH. The segment at 235–519 is thymidylate synthase; it reads EEFLYLNMVE…HKKIEMKMAV (285 aa). Arg256 provides a ligand contact to dUMP. Cys401 is an active-site residue. Residues His402, 420–424, Asn432, and 462–464 contribute to the dUMP site; these read QRSAD and HVY.

The protein in the N-terminal section; belongs to the dihydrofolate reductase family. This sequence in the C-terminal section; belongs to the thymidylate synthase family. In terms of assembly, heterodimer or homodimer.

It catalyses the reaction (6S)-5,6,7,8-tetrahydrofolate + NADP(+) = 7,8-dihydrofolate + NADPH + H(+). The catalysed reaction is dUMP + (6R)-5,10-methylene-5,6,7,8-tetrahydrofolate = 7,8-dihydrofolate + dTMP. Its pathway is cofactor biosynthesis; tetrahydrofolate biosynthesis; 5,6,7,8-tetrahydrofolate from 7,8-dihydrofolate: step 1/1. In terms of biological role, bifunctional enzyme. Involved in de novo dTMP biosynthesis. Key enzyme in folate metabolism. Can play two different roles depending on the source of dihydrofolate: de novo synthesis of tetrahydrofolate or recycling of the dihydrofolate released as one of the end products of the TS catalyzed reaction. Catalyzes an essential reaction for de novo glycine and purine synthesis, DNA precursor synthesis, and for the conversion of dUMP to dTMP. The sequence is that of Bifunctional dihydrofolate reductase-thymidylate synthase 1 (THY-1) from Arabidopsis thaliana (Mouse-ear cress).